The primary structure comprises 461 residues: mRNA cap guanine-N(7) methyltransferase (461 aa).

The tract at residues 1-117 (MESSVKASVD…RKLQPQDALE (117 aa)) is disordered. Residues Ser11, Ser15, Ser16, and Ser58 each carry the phosphoserine modification. Polar residues-rich tracts occupy residues 14–29 (ESSP…SGQR) and 49–58 (EQNSSYVQDS). The span at 65-93 (LDVEIILDEKHSEDDGGASKRSKLERGGG) shows a compositional bias: basic and acidic residues. Phosphoserine occurs at positions 94 and 99. Residues 107–109 (KRK) carry the Nuclear localization signal motif. The 309-residue stretch at 152–460 (SRIFYLRNFN…IYLVFAFEKQ (309 aa)) folds into the mRNA cap 0 methyltransferase domain. 161-162 (NN) is a binding site for mRNA. S-adenosyl-L-methionine contacts are provided by Lys165, Gly190, Asp212, Asp246, Gln269, and Tyr274.

It belongs to the class I-like SAM-binding methyltransferase superfamily. mRNA cap 0 methyltransferase family. Interacts with importin alpha, leading to stimulate both RNA-binding and methyltransferase activity. Interaction with importin alpha and beta is required for its nuclear localization, importin beta dissociating in response to RanGTP, allowing RNMT-importin alpha to bind RNA substrates. Interacts with elongating form of polymerase II and RNGTT. Interacts with RAMAC, this interaction significantly enhances RNA-binding and cap methyltransferase activity.

The protein localises to the nucleus. It carries out the reaction a 5'-end (5'-triphosphoguanosine)-ribonucleoside in mRNA + S-adenosyl-L-methionine = a 5'-end (N(7)-methyl 5'-triphosphoguanosine)-ribonucleoside in mRNA + S-adenosyl-L-homocysteine. Its activity is regulated as follows. Methyltransferase activity is activated by RAMAC. Functionally, catalytic subunit of the mRNA-capping methyltransferase RNMT:RAMAC complex that methylates the N7 position of the added guanosine to the 5'-cap structure of mRNAs. Binds RNA containing 5'-terminal GpppC. This chain is mRNA cap guanine-N(7) methyltransferase (Rnmt), found in Rattus norvegicus (Rat).